The chain runs to 286 residues: Aspartate-semialdehyde dehydrogenase (286 aa).

NADP(+) contacts are provided by residues 10 to 13 (RGMV), 37 to 38 (TS), and Gln-74. Arg-103 is a binding site for phosphate. Cys-136 (acyl-thioester intermediate) is an active-site residue. A substrate-binding site is contributed by Gln-163. Residues 166–167 (SG) and Pro-194 contribute to the NADP(+) site. Glu-242 lines the substrate pocket. Lys-245 provides a ligand contact to phosphate. Arg-269 contributes to the substrate binding site. The active-site Proton acceptor is His-276.

Belongs to the aspartate-semialdehyde dehydrogenase family. In terms of assembly, homodimer.

The enzyme catalyses L-aspartate 4-semialdehyde + phosphate + NADP(+) = 4-phospho-L-aspartate + NADPH + H(+). It functions in the pathway amino-acid biosynthesis; L-lysine biosynthesis via DAP pathway; (S)-tetrahydrodipicolinate from L-aspartate: step 2/4. It participates in amino-acid biosynthesis; L-methionine biosynthesis via de novo pathway; L-homoserine from L-aspartate: step 2/3. The protein operates within amino-acid biosynthesis; L-threonine biosynthesis; L-threonine from L-aspartate: step 2/5. Functionally, catalyzes the NADPH-dependent formation of L-aspartate-semialdehyde (L-ASA) by the reductive dephosphorylation of L-aspartyl-4-phosphate. The protein is Aspartate-semialdehyde dehydrogenase (asd) of Actinobacillus pleuropneumoniae (Haemophilus pleuropneumoniae).